Reading from the N-terminus, the 697-residue chain is Elongation factor G (697 aa).

One can recognise a tr-type G domain in the interval 8 to 282 (EDYRNIGIMA…AIVDYLPSPL (275 aa)). Residues 17–24 (AHIDAGKT), 81–85 (DTPGH), and 135–138 (NKMD) contribute to the GTP site.

The protein belongs to the TRAFAC class translation factor GTPase superfamily. Classic translation factor GTPase family. EF-G/EF-2 subfamily.

Its subcellular location is the cytoplasm. Its function is as follows. Catalyzes the GTP-dependent ribosomal translocation step during translation elongation. During this step, the ribosome changes from the pre-translocational (PRE) to the post-translocational (POST) state as the newly formed A-site-bound peptidyl-tRNA and P-site-bound deacylated tRNA move to the P and E sites, respectively. Catalyzes the coordinated movement of the two tRNA molecules, the mRNA and conformational changes in the ribosome. The chain is Elongation factor G from Metamycoplasma arthritidis (strain 158L3-1) (Mycoplasma arthritidis).